Reading from the N-terminus, the 368-residue chain is E3 ubiquitin-protein ligase ATL31 (368 aa).

Positions Met-1 to Gly-23 are cleaved as a signal peptide. Residues Ala-46–Ile-66 form a helical membrane-spanning segment. An RING-type; atypical zinc finger spans residues Cys-124–Arg-166. The residue at position 247 (Ser-247) is a Phosphoserine. The interval Asn-342–Val-368 is disordered. Residues Gly-347 to Val-368 show a composition bias toward polar residues.

It belongs to the RING-type zinc finger family. ATL subfamily.

The protein localises to the membrane. It carries out the reaction S-ubiquitinyl-[E2 ubiquitin-conjugating enzyme]-L-cysteine + [acceptor protein]-L-lysine = [E2 ubiquitin-conjugating enzyme]-L-cysteine + N(6)-ubiquitinyl-[acceptor protein]-L-lysine.. It participates in protein modification; protein ubiquitination. Functionally, E3 ubiquitin-protein ligase that is required for the plant C/N response during seedling growth transition. May be involved in the early steps of the plant defense signaling pathway. The chain is E3 ubiquitin-protein ligase ATL31 (ATL31) from Arabidopsis thaliana (Mouse-ear cress).